Reading from the N-terminus, the 895-residue chain is Probable aminodeoxychorismate synthase, chloroplastic (895 aa).

The disordered stretch occupies residues 1–45 (MAALRLPTPPPPRAPAPWLHSSHRRRVAAPRGAGGGGGGGGAVPP). Residues 1–48 (MAALRLPTPPPPRAPAPWLHSSHRRRVAAPRGAGGGGGGGGAVPPPPV) constitute a chloroplast transit peptide. Residues 32 to 42 (GAGGGGGGGGA) are compositionally biased toward gly residues. Residues 49 to 307 (RTLLIDNYDS…KKITTDFGLQ (259 aa)) form the Glutamine amidotransferase type-1 domain. Catalysis depends on Cys135, which acts as the Nucleophile. Catalysis depends on residues His281 and Glu283. The tract at residues 387–875 (IFSVLFGHHS…KAKAPTKVVE (489 aa)) is PABB component.

It in the C-terminal section; belongs to the anthranilate synthase component I family.

The protein localises to the plastid. Its subcellular location is the chloroplast. It catalyses the reaction chorismate + L-glutamine = 4-amino-4-deoxychorismate + L-glutamate. The protein operates within cofactor biosynthesis; tetrahydrofolate biosynthesis; 4-aminobenzoate from chorismate: step 1/2. Its pathway is antibiotic biosynthesis; candicidin biosynthesis. Functionally, bifunctional enzyme that catalyzes the biosynthesis of 4-amino-4-deoxychorismate (ADC) from chorismate and glutamine. In the first step, a glutamine amidotransferase generates ammonia that is channelled between the binding sites of glutamine and chorismate and used along with chorismate in the second step, catalyzed by aminodeoxychorismate synthase, to produce ADC. Required for the synthesis of 4-aminobenzoate (PABA), an important component in tetrahydrofolate biosynthesis. Does not possess ADC lyase activity. The sequence is that of Probable aminodeoxychorismate synthase, chloroplastic (ADCS) from Oryza sativa subsp. japonica (Rice).